The following is a 254-amino-acid chain: Proteasome activator complex subunit 3 (254 aa).

An N-acetylalanine modification is found at Ala-2. Phosphoserine occurs at positions 17 and 24. Residue Lys-195 is modified to N6-acetyllysine; by P300/CBP. Ser-247 carries the post-translational modification Phosphoserine; by CHEK2.

The protein belongs to the PA28 family. As to quaternary structure, homoheptamer; the stability of the heptamer is essential for the specific activation of the trypsine-like subunit and inhibition of the chymotrypsin-like and postglutamyl-preferring (PGPH) subunits of the proteasome. Interacts with p53/TP53, MDM2 and MAP3K3. Associates with the proteasome. Interacts with CCAR2. Interacts with PSME3IP1 (via C-terminus); the interaction is direct and promotes the association of PSME3 with the 20S proteasome. Interacts with COIL; the interaction is inhibited by PSME3IP1. Post-translationally, phosphorylated by MAP3K3. Phosphorylation at Ser-247 promotes its association with CCAR2. Acetylation at the major site Lys-195 is important for oligomerization and ability to degrade its target substrates. Deacetylated by SIRT1.

Its subcellular location is the nucleus. The protein localises to the cytoplasm. Subunit of the 11S REG-gamma (also called PA28-gamma) proteasome regulator, a doughnut-shaped homoheptamer which associates with the proteasome. 11S REG-gamma activates the trypsin-like catalytic subunit of the proteasome but inhibits the chymotrypsin-like and postglutamyl-preferring (PGPH) subunits. Facilitates the MDM2-p53/TP53 interaction which promotes ubiquitination- and MDM2-dependent proteasomal degradation of p53/TP53, limiting its accumulation and resulting in inhibited apoptosis after DNA damage. May also be involved in cell cycle regulation. Mediates CCAR2 and CHEK2-dependent SIRT1 inhibition. The sequence is that of Proteasome activator complex subunit 3 (PSME3) from Pongo abelii (Sumatran orangutan).